Here is a 761-residue protein sequence, read N- to C-terminus: RNA-binding protein 12B (761 aa).

Residues Ser-98, Ser-101, and Ser-112 each carry the phosphoserine modification. A Glycyl lysine isopeptide (Lys-Gly) (interchain with G-Cter in SUMO2) cross-link involves residue Lys-114. The interval 120–147 (SGYGSSINQDAGFHSNGTGHGNLRPRKT) is disordered. Residue Lys-151 forms a Glycyl lysine isopeptide (Lys-Gly) (interchain with G-Cter in SUMO2) linkage. Residues 155 to 230 (PYLFLRGLPY…RFIEVMQGSE (76 aa)) form the RRM 1 domain. Over residues 247 to 262 (LRRSEEHSPPRGINDR) the composition is skewed to basic and acidic residues. The disordered stretch occupies residues 247 to 278 (LRRSEEHSPPRGINDRHFRKRSHSKSPRRTRS). Phosphoserine is present on residues Ser-250 and Ser-254. The span at 263–278 (HFRKRSHSKSPRRTRS) shows a compositional bias: basic residues. Thr-276 bears the Phosphothreonine mark. Phosphoserine occurs at positions 278, 280, 292, and 294. Residues 284-360 (FYVHLKNLSL…RPVHIDPISR (77 aa)) form the RRM 2 domain. Lys-319 is modified (N6-acetyllysine). Residue Lys-335 forms a Glycyl lysine isopeptide (Lys-Gly) (interchain with G-Cter in SUMO2) linkage. Residues 372-384 (KKRSGSPERDRPG) show a composition bias toward basic and acidic residues. Residues 372–392 (KKRSGSPERDRPGHVSQKYSQ) form a disordered region. Position 377 is a phosphoserine (Ser-377). The RRM 3 domain occupies 400 to 477 (LCIYIRNFPF…TEVLLRLISE (78 aa)). Glycyl lysine isopeptide (Lys-Gly) (interchain with G-Cter in SUMO2) cross-links involve residues Lys-514 and Lys-541. Positions 538-621 (DNFKHPQRDF…RHPREEDWRR (84 aa)) are enriched in basic and acidic residues. Residues 538–690 (DNFKHPQRDF…THQMKTSGAL (153 aa)) are disordered. Phosphoserine is present on residues Ser-575 and Ser-591. The segment covering 627–654 (LQSTSGGHPQSISGGHPQSISGARPRST) has biased composition (polar residues). Low complexity predominate over residues 661-672 (SISGGRLRSISG).

This chain is RNA-binding protein 12B (RBM12B), found in Pongo abelii (Sumatran orangutan).